A 147-amino-acid chain; its full sequence is Cytochrome c-type biogenesis protein CcmE (147 aa).

Over 1–9 the chain is Cytoplasmic; it reads MKSLKKKRR. Residues 10–30 traverse the membrane as a helical; Signal-anchor for type II membrane protein segment; it reads IQILVAAAVALVLAVGLIGYG. At 31-147 the chain is on the periplasmic side; sequence FRDGINLYRS…EQGVYQEPNS (117 aa). Heme-binding residues include histidine 123 and tyrosine 127.

The protein belongs to the CcmE/CycJ family.

Its subcellular location is the cell inner membrane. Functionally, heme chaperone required for the biogenesis of c-type cytochromes. Transiently binds heme delivered by CcmC and transfers the heme to apo-cytochromes in a process facilitated by CcmF and CcmH. The sequence is that of Cytochrome c-type biogenesis protein CcmE from Paracoccus denitrificans (strain Pd 1222).